We begin with the raw amino-acid sequence, 130 residues long: Histone H2A.1 (130 aa).

Positions 1–22 (MSGGKGKAGSSEKASTSRSAKA) are disordered. Serine 2 bears the N-acetylserine mark. Residues lysine 5 and lysine 7 each carry the N6-acetyllysine modification. N5-methylglutamine is present on glutamine 105. At serine 127 the chain carries Phosphoserine. Residues 127-128 (SQ) carry the [ST]-Q motif motif.

The protein belongs to the histone H2A family. As to quaternary structure, the nucleosome is a histone octamer containing two molecules each of H2A, H2B, H3 and H4 assembled in one H3-H4 heterotetramer and two H2A-H2B heterodimers. The octamer wraps approximately 147 bp of DNA. Post-translationally, phosphorylated to form H2AS128ph (gamma-H2A) in response to DNA double-strand breaks (DSBs) generated by exogenous genotoxic agents and by stalled replication forks. Phosphorylation is dependent on the DNA damage checkpoint kinases MEC1/ATR and TEL1/ATM, spreads on either side of a detected DSB site and may mark the surrounding chromatin for recruitment of proteins required for DNA damage signaling and repair. Gamma-H2A is removed from the DNA prior to the strand invasion-primer extension step of the repair process and subsequently dephosphorylated. Dephosphorylation is necessary for efficient recovery from the DNA damage checkpoint. Acetylated by ESA1 to form H2AK4ac and H2AK7ac.

The protein localises to the nucleus. It is found in the chromosome. Functionally, core component of nucleosome which plays a central role in DNA double strand break (DSB) repair. Nucleosomes wrap and compact DNA into chromatin, limiting DNA accessibility to the cellular machineries which require DNA as a template. Histones thereby play a central role in transcription regulation, DNA repair, DNA replication and chromosomal stability. DNA accessibility is regulated via a complex set of post-translational modifications of histones, also called histone code, and nucleosome remodeling. In Lodderomyces elongisporus (strain ATCC 11503 / CBS 2605 / JCM 1781 / NBRC 1676 / NRRL YB-4239) (Yeast), this protein is Histone H2A.1 (HTA1).